The primary structure comprises 258 residues: Probable dihydroorotate dehydrogenase B (NAD(+)), electron transfer subunit (258 aa).

The 90-residue stretch at 1-90 (MRPISATIKE…RGPYGNGWEI (90 aa)) folds into the FAD-binding FR-type domain. The [2Fe-2S] cluster site is built by cysteine 210, cysteine 215, cysteine 218, and cysteine 228.

Belongs to the PyrK family. As to quaternary structure, heterotetramer of 2 PyrK and 2 PyrD type B subunits. [2Fe-2S] cluster serves as cofactor. The cofactor is FAD.

It participates in pyrimidine metabolism; UMP biosynthesis via de novo pathway; orotate from (S)-dihydroorotate (NAD(+) route): step 1/1. Responsible for channeling the electrons from the oxidation of dihydroorotate from the FMN redox center in the PyrD type B subunit to the ultimate electron acceptor NAD(+). The sequence is that of Probable dihydroorotate dehydrogenase B (NAD(+)), electron transfer subunit from Methanocella arvoryzae (strain DSM 22066 / NBRC 105507 / MRE50).